The following is a 317-amino-acid chain: Carbonic anhydrase 5B, mitochondrial (317 aa).

The N-terminal 33 residues, 1-33, are a transit peptide targeting the mitochondrion; it reads MAVMNHLRVILQVSSSTLPWRRCWVPRLVPRRS. One can recognise an Alpha-carbonic anhydrase domain in the interval 37 to 296; the sequence is YTCTYRTRNR…LMNRTVRSSF (260 aa). Zn(2+) is bound by residues H130, H132, and H155. Substrate is bound at residue 235–236; it reads TT.

It belongs to the alpha-carbonic anhydrase family. The cofactor is Zn(2+). In terms of tissue distribution, expressed in the heart, liver, lung, kidney, testis, and skeletal muscle (at protein level).

It localises to the mitochondrion. The enzyme catalyses hydrogencarbonate + H(+) = CO2 + H2O. Functionally, mitochondrial carbonic anhydrase that catalyzes the reversible conversion of carbon dioxide to bicarbonate/HCO3. This chain is Carbonic anhydrase 5B, mitochondrial (Ca5b), found in Mus musculus (Mouse).